A 414-amino-acid chain; its full sequence is Serine hydroxymethyltransferase (414 aa).

Residues Leu116 and 120–122 (GHL) each bind (6S)-5,6,7,8-tetrahydrofolate. Lys224 carries the N6-(pyridoxal phosphate)lysine modification. 348–350 (SPF) contributes to the (6S)-5,6,7,8-tetrahydrofolate binding site.

The protein belongs to the SHMT family. In terms of assembly, homodimer. Pyridoxal 5'-phosphate serves as cofactor.

It localises to the cytoplasm. The catalysed reaction is (6R)-5,10-methylene-5,6,7,8-tetrahydrofolate + glycine + H2O = (6S)-5,6,7,8-tetrahydrofolate + L-serine. It participates in one-carbon metabolism; tetrahydrofolate interconversion. Its pathway is amino-acid biosynthesis; glycine biosynthesis; glycine from L-serine: step 1/1. In terms of biological role, catalyzes the reversible interconversion of serine and glycine with tetrahydrofolate (THF) serving as the one-carbon carrier. This reaction serves as the major source of one-carbon groups required for the biosynthesis of purines, thymidylate, methionine, and other important biomolecules. Also exhibits THF-independent aldolase activity toward beta-hydroxyamino acids, producing glycine and aldehydes, via a retro-aldol mechanism. This chain is Serine hydroxymethyltransferase, found in Campylobacter jejuni subsp. doylei (strain ATCC BAA-1458 / RM4099 / 269.97).